The primary structure comprises 655 residues: Very long-chain specific acyl-CoA dehydrogenase, mitochondrial (655 aa).

The transit peptide at 1–40 (MRAARMAQSTGRQLLRLRGVSSWPGELLGQPRPGPARRPY) directs the protein to the mitochondrion. The interval 22-66 (SWPGELLGQPRPGPARRPYASGVAQAAVDQSDSQPSEASTREKRA) is disordered. Residues 41 to 482 (ASGVAQAAVD…ALQGCMDKGK (442 aa)) are catalytic. A compositionally biased stretch (polar residues) spans 49–59 (VDQSDSQPSEA). Residue Lys71 is modified to N6-acetyllysine; alternate. At Lys71 the chain carries N6-succinyllysine; alternate. Residue Lys195 is modified to N6-succinyllysine. Residue 214-223 (FCLTEPSSGS) coordinates FAD. Cys237 carries the S-nitrosocysteine modification. Lys239 carries the post-translational modification N6-acetyllysine; alternate. An N6-succinyllysine; alternate modification is found at Lys239. 249–251 (WIS) contacts FAD. N6-acetyllysine; alternate occurs at positions 276 and 278. An N6-succinyllysine; alternate mark is found at Lys276 and Lys278. N6-acetyllysine is present on Lys298. N6-acetyllysine; alternate is present on Lys331. Lys331 is subject to N6-succinyllysine; alternate. At Lys372 the chain carries N6-succinyllysine. 461-463 (FEG) is a binding site for substrate. Glu462 functions as the Proton acceptor in the catalytic mechanism. Position 464–466 (464–466 (TND)) interacts with FAD. N6-acetyllysine; alternate is present on Lys482. Lys482 is subject to N6-succinyllysine; alternate. Residues 483 to 516 (ELSGLGNALKNPFGNAGLLLGEAGKQLRRRAGLG) form a membrane-anchoring region. Residues Ser517 and Ser522 each carry the phosphoserine modification. Lys550 carries the post-translational modification N6-acetyllysine. Lys556 carries the N6-acetyllysine; alternate modification. Lys556 is modified (N6-succinyllysine; alternate). Gln562 provides a ligand contact to FAD. The residue at position 639 (Lys639) is an N6-succinyllysine.

It belongs to the acyl-CoA dehydrogenase family. Homodimer. Homodimerizes after import into the mitochondrion. The cofactor is FAD. Post-translationally, S-nitrosylation at Cys-237 in liver improves catalytic efficiency.

The protein resides in the mitochondrion inner membrane. The catalysed reaction is a very-long-chain 2,3-saturated fatty acyl-CoA + oxidized [electron-transfer flavoprotein] + H(+) = a very-long-chain (2E)-enoyl-CoA + reduced [electron-transfer flavoprotein]. It carries out the reaction dodecanoyl-CoA + oxidized [electron-transfer flavoprotein] + H(+) = (2E)-dodecenoyl-CoA + reduced [electron-transfer flavoprotein]. The enzyme catalyses tetradecanoyl-CoA + oxidized [electron-transfer flavoprotein] + H(+) = (2E)-tetradecenoyl-CoA + reduced [electron-transfer flavoprotein]. It catalyses the reaction oxidized [electron-transfer flavoprotein] + hexadecanoyl-CoA + H(+) = (2E)-hexadecenoyl-CoA + reduced [electron-transfer flavoprotein]. The catalysed reaction is octadecanoyl-CoA + oxidized [electron-transfer flavoprotein] + H(+) = (2E)-octadecenoyl-CoA + reduced [electron-transfer flavoprotein]. It carries out the reaction eicosanoyl-CoA + oxidized [electron-transfer flavoprotein] + H(+) = (2E)-eicosenoyl-CoA + reduced [electron-transfer flavoprotein]. The enzyme catalyses docosanoyl-CoA + oxidized [electron-transfer flavoprotein] + H(+) = (2E)-docosenoyl-CoA + reduced [electron-transfer flavoprotein]. It catalyses the reaction tetracosanoyl-CoA + oxidized [electron-transfer flavoprotein] + H(+) = (2E)-tetracosenoyl-CoA + reduced [electron-transfer flavoprotein]. Its pathway is lipid metabolism; mitochondrial fatty acid beta-oxidation. In terms of biological role, very long-chain specific acyl-CoA dehydrogenase is one of the acyl-CoA dehydrogenases that catalyze the first step of mitochondrial fatty acid beta-oxidation, an aerobic process breaking down fatty acids into acetyl-CoA and allowing the production of energy from fats. The first step of fatty acid beta-oxidation consists in the removal of one hydrogen from C-2 and C-3 of the straight-chain fatty acyl-CoA thioester, resulting in the formation of trans-2-enoyl-CoA. Among the different mitochondrial acyl-CoA dehydrogenases, very long-chain specific acyl-CoA dehydrogenase acts specifically on acyl-CoAs with saturated 12 to 24 carbons long primary chains. This Bos taurus (Bovine) protein is Very long-chain specific acyl-CoA dehydrogenase, mitochondrial.